The sequence spans 419 residues: Probable serine/threonine-protein kinase DDB_G0290859 (419 aa).

The Protein kinase domain occupies 40–387; it reads YDIISTIGSG…ASTIKKHPFF (348 aa). Residues 46–54 and lysine 69 each bind ATP; that span reads IGSGSYGEV. The Proton acceptor role is filled by aspartate 173. The region spanning 388-419 is the AGC-kinase C-terminal domain; the sequence is EGINWEEMANFNVEPPFKPTLSSDDDISYFTN.

The protein belongs to the protein kinase superfamily. AGC Ser/Thr protein kinase family.

It catalyses the reaction L-seryl-[protein] + ATP = O-phospho-L-seryl-[protein] + ADP + H(+). It carries out the reaction L-threonyl-[protein] + ATP = O-phospho-L-threonyl-[protein] + ADP + H(+). The sequence is that of Probable serine/threonine-protein kinase DDB_G0290859 from Dictyostelium discoideum (Social amoeba).